The sequence spans 3413 residues: Protein pecanex (3413 aa).

2 consecutive transmembrane segments (helical) span residues 33 to 53 (VVHL…YLYF) and 57 to 77 (WLTW…VKLA). N164 is a glycosylation site (N-linked (GlcNAc...) asparagine). The span at 182–195 (GSQQDQQSLAGSAS) shows a compositional bias: low complexity. Disordered stretches follow at residues 182 to 213 (GSQQ…STSA) and 235 to 314 (GSSA…ENKL). Over residues 196 to 213 (VSKSIRSTGPGGNSSTSA) the composition is skewed to polar residues. A glycan (N-linked (GlcNAc...) asparagine) is linked at N208. Residues 302-312 (AAAAANSNAEN) are compositionally biased toward low complexity. N317 carries N-linked (GlcNAc...) asparagine glycosylation. Disordered stretches follow at residues 327-363 (PSFL…GDAP), 379-403 (LVNP…RLKH), 540-609 (PGTG…GTGG), and 625-651 (PSVS…NPLP). The segment covering 330-354 (LHSQPTNKARGQTNPRQHFITSAPS) has biased composition (polar residues). Over residues 392-402 (RSSETHDERLK) the composition is skewed to basic and acidic residues. Residues 541-559 (GTGGSVTGGGGAAGGGGSA) are compositionally biased toward gly residues. N-linked (GlcNAc...) asparagine glycans are attached at residues N569 and N581. The span at 569–582 (NATSYKHGSSQSNK) shows a compositional bias: polar residues. Residues 599–609 (GTSGGAGGTGG) are compositionally biased toward gly residues. The segment covering 625–634 (PSVSNLSPHP) has biased composition (polar residues). N685 carries an N-linked (GlcNAc...) asparagine glycan. Over residues 720–730 (EKTAHEEHGDD) the composition is skewed to basic and acidic residues. 4 disordered regions span residues 720 to 745 (EKTA…DDEV), 816 to 873 (HHHS…NRQP), 886 to 921 (RQEL…DCEQ), and 1002 to 1021 (KQTK…HSIS). Residues 816 to 826 (HHHSHLHHHKA) show a composition bias toward basic residues. Low complexity predominate over residues 828–846 (SVEGAGPSGGSVAVGVSAG). Residues 847-856 (NDDEDEETED) are compositionally biased toward acidic residues. N-linked (GlcNAc...) asparagine glycosylation occurs at N857. Residues 1008-1021 (SRNSSSSNSTHSIS) show a composition bias toward low complexity. Residues N1010, N1015, N1069, and N1199 are each glycosylated (N-linked (GlcNAc...) asparagine). 2 helical membrane-spanning segments follow: residues 1315–1335 (MHVL…AAIL) and 1343–1363 (LCAL…VKSV). N1375 carries an N-linked (GlcNAc...) asparagine glycan. Helical transmembrane passes span 1376–1396 (KTVA…LLLL), 1423–1443 (VVAL…IIFS), 1474–1494 (LLGS…LYGP), and 1504–1524 (GTQY…GYHL). N-linked (GlcNAc...) asparagine glycosylation occurs at N1572. Disordered stretches follow at residues 1577-1675 (QLTT…TGEP), 1722-1744 (DKIS…GAGT), and 1760-1813 (AEAE…LPDP). Basic and acidic residues-rich tracts occupy residues 1587-1598 (RQTDVKTEHEQI) and 1607-1620 (TVNE…HGAD). Over residues 1639–1666 (KTSSLGSSQQTLGKTISSSKRAITASSS) the composition is skewed to low complexity. Residues 1725-1738 (SSSSATNPGDMSTL) show a composition bias toward polar residues. 5 tandem repeats follow at residues 1776-1777 (GT), 1778-1779 (GT), 1780-1781 (GT), 1782-1783 (GT), and 1784-1785 (GT). Residues 1776–1785 (GTGTGTGTGT) form a 5 X 2 AA tandem repeats of G-T region. N-linked (GlcNAc...) asparagine glycans are attached at residues N1791 and N1804. The segment covering 1799–1808 (GNTNSNGTGN) has biased composition (low complexity). 5 helical membrane passes run 1830–1850 (LVVM…TVFT), 1856–1876 (LNVV…YIVP), 1914–1934 (LYIY…AISS), 1940–1960 (QLIV…ICAL), and 1976–1996 (IIIF…ETFI). The disordered stretch occupies residues 2344–2463 (SMGGAPPAQA…HSFANISRQT (120 aa)). Positions 2346 to 2370 (GGAPPAQAPAAAGGASSAPATAGVA) are enriched in low complexity. N2380 and N2387 each carry an N-linked (GlcNAc...) asparagine glycan. Residues 2389-2411 (SAHGGQAGPSSGQSKSQSQQQLR) show a composition bias toward low complexity. Over residues 2437–2447 (GTGGVTGGGGD) the composition is skewed to gly residues. A compositionally biased stretch (polar residues) spans 2449–2463 (QLSSSHSFANISRQT). N-linked (GlcNAc...) asparagine glycans are attached at residues N2458, N2619, and N2717. 2 disordered regions span residues 2908-2997 (LNRE…SSGS) and 3198-3242 (ESST…GDDG). Residues 2940-2956 (RRPEVGSSRGRDHERRA) are compositionally biased toward basic and acidic residues. The N-linked (GlcNAc...) asparagine glycan is linked to N3246. Residues 3295–3413 (AEESKEKGTA…NGESEAGTTV (119 aa)) are disordered. Residues 3310–3323 (EGEEGVGEMEIEPE) are compositionally biased toward acidic residues. Over residues 3364–3377 (TSSTSSAKSTSSPS) the composition is skewed to low complexity. Over residues 3380–3406 (QEEEDAVDPEETPELASEESPSDENGE) the composition is skewed to acidic residues.

It belongs to the pecanex family.

It localises to the membrane. Functionally, involved in neurogenesis. In Drosophila melanogaster (Fruit fly), this protein is Protein pecanex (pcx).